We begin with the raw amino-acid sequence, 130 residues long: Small ribosomal subunit protein uS8 (130 aa).

It belongs to the universal ribosomal protein uS8 family. Part of the 30S ribosomal subunit.

In terms of biological role, one of the primary rRNA binding proteins, it binds directly to 16S rRNA central domain where it helps coordinate assembly of the platform of the 30S subunit. The protein is Small ribosomal subunit protein uS8 of Methanosarcina mazei (strain ATCC BAA-159 / DSM 3647 / Goe1 / Go1 / JCM 11833 / OCM 88) (Methanosarcina frisia).